Here is an 896-residue protein sequence, read N- to C-terminus: Phosphatidate phosphatase LPIN2 (896 aa).

The tract at residues 1–108 (MNYVGQLAGQ…LPAYLATSPI (108 aa)) is N-LIP. Position 106 is a phosphoserine (Ser106). Residues 120–208 (TPLVKSGGDE…SSNASLKEEE (89 aa)) are disordered. A compositionally biased stretch (basic residues) spans 152-162 (VKKKKRRRKKY). The Nuclear localization signal signature appears at 153–158 (KKKKRR). 5 positions are modified to phosphoserine: Ser174, Ser186, Ser187, Ser243, and Ser303. Disordered stretches follow at residues 370–405 (AEAP…DIYL) and 420–459 (FPKS…TECL). Residues 387–396 (KKKGVHKRSQ) are compositionally biased toward basic residues. The segment covering 426–448 (EPGSRQWPESDTLSGSQSPQSVG) has biased composition (polar residues). A Phosphoserine modification is found at Ser566. Over residues 569-579 (KQLPESKEGKS) the composition is skewed to basic and acidic residues. The disordered stretch occupies residues 569-636 (KQLPESKEGK…LSHGSTTSYK (68 aa)). The span at 604 to 617 (SSSDEGSQELEESI) shows a compositional bias: acidic residues. The C-LIP stretch occupies residues 635-837 (YKKSLRLSSD…RIFTVNPKGE (203 aa)). The short motif at 689-693 (DIDGT) is the DXDXT motif element. The LXXIL motif motif lies at 700 to 704 (LGQIL).

Belongs to the lipin family. It depends on Mg(2+) as a cofactor. As to expression, expressed in liver, lung, kidney, placenta, spleen, thymus, lymph node, prostate, testes, small intestine, and colon.

It localises to the nucleus. It is found in the cytoplasm. Its subcellular location is the cytosol. The protein localises to the endoplasmic reticulum membrane. It carries out the reaction a 1,2-diacyl-sn-glycero-3-phosphate + H2O = a 1,2-diacyl-sn-glycerol + phosphate. Its activity is regulated as follows. Inhibited by N-ethylmaleimide. Acts as a magnesium-dependent phosphatidate phosphatase enzyme which catalyzes the conversion of phosphatidic acid to diacylglycerol during triglyceride, phosphatidylcholine and phosphatidylethanolamine biosynthesis in the endoplasmic reticulum membrane. Plays important roles in controlling the metabolism of fatty acids at different levels. Also acts as a nuclear transcriptional coactivator for PPARGC1A to modulate lipid metabolism. In Homo sapiens (Human), this protein is Phosphatidate phosphatase LPIN2.